Here is a 642-residue protein sequence, read N- to C-terminus: Medium-chain-fatty-acid--[acyl-carrier-protein] ligase TtuA (642 aa).

It belongs to the ATP-dependent AMP-binding enzyme family.

The catalysed reaction is a medium-chain fatty acid + holo-[ACP] + ATP = a medium-chain fatty acyl-[ACP] + AMP + diphosphate. It catalyses the reaction a medium-chain fatty acid + ATP + H(+) = a medium-chain fatty acyl-AMP + diphosphate. It carries out the reaction a medium-chain fatty acyl-AMP + holo-[ACP] = a medium-chain fatty acyl-[ACP] + AMP + H(+). The enzyme catalyses decanoate + holo-[ACP] + ATP = decanoyl-[ACP] + AMP + diphosphate. The catalysed reaction is decanoate + ATP + H(+) = decanoyl-AMP + diphosphate. It catalyses the reaction decanoyl-AMP + holo-[ACP] = decanoyl-[ACP] + AMP + H(+). Ligase likely involved in the biosynthesis of a polyyne metabolite. Catalyzes the activation of decanoic acid, followed by the loading of the activated decanoic acid onto the acyl carrier protein TtuC. Decanoic acid is the preferred substrate, but it can also use 10-undecenoic acid and lauric acid. Nonanoic acid and 7-octenoic acid are only weakly activated. The polypeptide is Medium-chain-fatty-acid--[acyl-carrier-protein] ligase TtuA (Teredinibacter turnerae (strain ATCC 39867 / T7901)).